Consider the following 182-residue polypeptide: Inner membrane-spanning protein YciB (182 aa).

5 consecutive transmembrane segments (helical) span residues 22–42, 53–73, 76–96, 121–141, and 149–169; these read IYAA…VVWV, ITLV…NEAF, WKVT…QFLF, FSWG…AFYL, and FKVF…GIYI.

This sequence belongs to the YciB family.

It localises to the cell inner membrane. Plays a role in cell envelope biogenesis, maintenance of cell envelope integrity and membrane homeostasis. This is Inner membrane-spanning protein YciB from Tolumonas auensis (strain DSM 9187 / NBRC 110442 / TA 4).